Consider the following 366-residue polypeptide: tRNA/tmRNA (uracil-C(5))-methyltransferase (366 aa).

Gln-190, Tyr-218, Asn-223, Glu-239, and Asp-299 together coordinate S-adenosyl-L-methionine. The active-site Nucleophile is Cys-324. The active-site Proton acceptor is the Glu-358.

The protein belongs to the class I-like SAM-binding methyltransferase superfamily. RNA M5U methyltransferase family. TrmA subfamily.

The catalysed reaction is uridine(54) in tRNA + S-adenosyl-L-methionine = 5-methyluridine(54) in tRNA + S-adenosyl-L-homocysteine + H(+). The enzyme catalyses uridine(341) in tmRNA + S-adenosyl-L-methionine = 5-methyluridine(341) in tmRNA + S-adenosyl-L-homocysteine + H(+). Functionally, dual-specificity methyltransferase that catalyzes the formation of 5-methyluridine at position 54 (m5U54) in all tRNAs, and that of position 341 (m5U341) in tmRNA (transfer-mRNA). This Salmonella heidelberg (strain SL476) protein is tRNA/tmRNA (uracil-C(5))-methyltransferase.